Consider the following 232-residue polypeptide: Cytidylate kinase (232 aa).

An ATP-binding site is contributed by 10 to 18 (GPAASGKST).

It belongs to the cytidylate kinase family. Type 1 subfamily.

It localises to the cytoplasm. The catalysed reaction is CMP + ATP = CDP + ADP. It carries out the reaction dCMP + ATP = dCDP + ADP. This Phytoplasma mali (strain AT) protein is Cytidylate kinase.